Reading from the N-terminus, the 127-residue chain is Ribonuclease P protein component 1 (127 aa).

This sequence belongs to the eukaryotic/archaeal RNase P protein component 1 family. Consists of a catalytic RNA component and at least 4-5 protein subunits.

It is found in the cytoplasm. The catalysed reaction is Endonucleolytic cleavage of RNA, removing 5'-extranucleotides from tRNA precursor.. Its function is as follows. Part of ribonuclease P, a protein complex that generates mature tRNA molecules by cleaving their 5'-ends. This is Ribonuclease P protein component 1 from Pyrococcus abyssi (strain GE5 / Orsay).